We begin with the raw amino-acid sequence, 64 residues long: MASIIVRHNESFDDALRRFKRGVAKDGTLQEVRKREFYVKPSVARKLKSEAAQKRARKRARNDH.

This sequence belongs to the bacterial ribosomal protein bS21 family.

In Oenococcus oeni (strain ATCC BAA-331 / PSU-1), this protein is Small ribosomal subunit protein bS21.